The primary structure comprises 75 residues: uncharacterized protein (75 aa).

This is an uncharacterized protein from Saccharomyces cerevisiae (strain ATCC 204508 / S288c) (Baker's yeast).